A 250-amino-acid chain; its full sequence is PHD finger protein ALFIN-LIKE 3 (250 aa).

M1 carries the post-translational modification N-acetylmethionine. A disordered region spans residues 146 to 192 (DKSSAANQNGNKSKSNSKVRTSEGKSSKTKQPKEEDEEIDEDDEDDH). The span at 149 to 163 (SAANQNGNKSKSNSK) shows a compositional bias: low complexity. The span at 179-192 (EEDEEIDEDDEDDH) shows a compositional bias: acidic residues. A PHD-type zinc finger spans residues 194-246 (ETLCGACGDSDGADEFWICCDLCEKWFHGKCVKITPARAEHIKQYKCPSCSNK).

The protein belongs to the Alfin family. Ubiquitously expressed.

The protein resides in the nucleus. In terms of biological role, histone-binding component that specifically recognizes H3 tails trimethylated on 'Lys-4' (H3K4me3), which mark transcription start sites of virtually all active genes. The polypeptide is PHD finger protein ALFIN-LIKE 3 (AL3) (Arabidopsis thaliana (Mouse-ear cress)).